The chain runs to 126 residues: Glycine cleavage system H protein (126 aa).

In terms of domain architecture, Lipoyl-binding spans 21–103 (TVTVGISNHA…YEGGWIARIK (83 aa)). Lysine 62 is modified (N6-lipoyllysine).

This sequence belongs to the GcvH family. In terms of assembly, the glycine cleavage system is composed of four proteins: P, T, L and H. (R)-lipoate serves as cofactor.

Functionally, the glycine cleavage system catalyzes the degradation of glycine. The H protein shuttles the methylamine group of glycine from the P protein to the T protein. The protein is Glycine cleavage system H protein of Aliivibrio salmonicida (strain LFI1238) (Vibrio salmonicida (strain LFI1238)).